Reading from the N-terminus, the 179-residue chain is Signal peptidase complex subunit 2 (179 aa).

The Cytoplasmic portion of the chain corresponds to 1 to 48 (MSGNNVQEEDSTFHVSNLYSETEIKKITQDFISEKIREQNFEEIVKYS). The chain crosses the membrane as a helical span at residues 49–69 (NIRIFLSLVLIVIGTYCSIFV). Residues 70 to 74 (QYKKN) are Extracellular-facing. Residues 75 to 95 (PVIMIQLLVAFFVVSTTLIIF) form a helical membrane-spanning segment. At 96 to 179 (EYFFFDDVFM…AHGRTLKLKN (84 aa)) the chain is on the cytoplasmic side.

The protein belongs to the SPCS2 family. Component of the signal peptidase complex (SPC) composed of a catalytic subunit SEC11/SPC21 and three accessory subunits SPC25, SPC3/SPC22, SPC1/SPC12. The complex induces a local thinning of the ER membrane which is used to measure the length of the signal peptide (SP) h-region of protein substrates. This ensures the selectivity of the complex towards h-regions shorter than 18-20 amino acids. Within the complex, interacts with SEC11/SPC21. Component of a complex composed of SPC25 and PMV; the interaction is mediated via the transmembrane domains. The complex interacts with the SEC61 channel-forming translocon complex and is involved in the recognition and import of PEXEL motif-containing proteins into the ER for subsequent export.

It localises to the endoplasmic reticulum membrane. In terms of biological role, component of the signal peptidase complex (SPC) which catalyzes the cleavage of N-terminal signal sequences from nascent proteins as they are translocated into the lumen of the endoplasmic reticulum. Enhances the enzymatic activity of SPC and facilitates the interactions between different components of the translocation site. Also, regulatory component of the CSP25-plasmepsin PMV complex which cleaves the pentameric localization motif RxLxE/Q/D (termed Plasmodium export element (PEXEL)) located downstream of the N-terminal secretory signal sequence of several proteins. The sequence is that of Signal peptidase complex subunit 2 from Plasmodium falciparum (isolate 3D7).